The following is a 672-amino-acid chain: tRNA 5-methylaminomethyl-2-thiouridine biosynthesis bifunctional protein MnmC (672 aa).

The interval methionine 1–glutamate 243 is tRNA (mnm(5)s(2)U34)-methyltransferase. The tract at residues isoleucine 269–leucine 672 is FAD-dependent cmnm(5)s(2)U34 oxidoreductase.

It in the N-terminal section; belongs to the methyltransferase superfamily. tRNA (mnm(5)s(2)U34)-methyltransferase family. This sequence in the C-terminal section; belongs to the DAO family. It depends on FAD as a cofactor.

The protein resides in the cytoplasm. The catalysed reaction is 5-aminomethyl-2-thiouridine(34) in tRNA + S-adenosyl-L-methionine = 5-methylaminomethyl-2-thiouridine(34) in tRNA + S-adenosyl-L-homocysteine + H(+). Functionally, catalyzes the last two steps in the biosynthesis of 5-methylaminomethyl-2-thiouridine (mnm(5)s(2)U) at the wobble position (U34) in tRNA. Catalyzes the FAD-dependent demodification of cmnm(5)s(2)U34 to nm(5)s(2)U34, followed by the transfer of a methyl group from S-adenosyl-L-methionine to nm(5)s(2)U34, to form mnm(5)s(2)U34. This Vibrio campbellii (strain ATCC BAA-1116) protein is tRNA 5-methylaminomethyl-2-thiouridine biosynthesis bifunctional protein MnmC.